The chain runs to 60 residues: Metallothionein A (60 aa).

A beta region spans residues 1 to 28 (MDPCECSKSGNCNCGGSCTCTNCSCKSC). Positions 4, 6, 12, 14, 18, 20, 23, 25, 28, 32, 33, 35, 36, 40, 43, 47, 49, 54, 58, and 59 each coordinate a divalent metal cation. The interval 29-60 (KKSCCPCCPSGCTKCASGCVCIGKTCDTSCCQ) is alpha.

The protein belongs to the metallothionein superfamily. Type 1 family.

In terms of biological role, metallothioneins have a high content of cysteine residues that bind various heavy metals. The chain is Metallothionein A (mta) from Chaenocephalus aceratus (Blackfin icefish).